The chain runs to 122 residues: Ribonuclease P protein component (122 aa).

It belongs to the RnpA family. In terms of assembly, consists of a catalytic RNA component (M1 or rnpB) and a protein subunit.

It catalyses the reaction Endonucleolytic cleavage of RNA, removing 5'-extranucleotides from tRNA precursor.. RNaseP catalyzes the removal of the 5'-leader sequence from pre-tRNA to produce the mature 5'-terminus. It can also cleave other RNA substrates such as 4.5S RNA. The protein component plays an auxiliary but essential role in vivo by binding to the 5'-leader sequence and broadening the substrate specificity of the ribozyme. The chain is Ribonuclease P protein component from Roseiflexus castenholzii (strain DSM 13941 / HLO8).